We begin with the raw amino-acid sequence, 238 residues long: EKC/KEOPS complex subunit SPAP27G11.07c (238 aa).

The region spanning 20 to 238 (EKKLTVVKQG…MRGRKRTMIG (219 aa)) is the Protein kinase domain. ATP is bound by residues 26-34 (VKQGAEAIT) and K48. The active-site Proton acceptor is D148.

It belongs to the protein kinase superfamily. BUD32 family. Component of the EKC/KEOPS complex composed of at least SPAP27G11.07c/BUD32, cgi121, gon7, pgp2 and SPAC4H3.13/PCC1; the whole complex dimerizes.

It localises to the cytoplasm. The protein resides in the nucleus. The protein localises to the chromosome. It is found in the telomere. The enzyme catalyses L-seryl-[protein] + ATP = O-phospho-L-seryl-[protein] + ADP + H(+). It carries out the reaction L-threonyl-[protein] + ATP = O-phospho-L-threonyl-[protein] + ADP + H(+). Functionally, component of the EKC/KEOPS complex that is required for the formation of a threonylcarbamoyl group on adenosine at position 37 (t(6)A37) in tRNAs that read codons beginning with adenine. The complex is probably involved in the transfer of the threonylcarbamoyl moiety of threonylcarbamoyl-AMP (TC-AMP) to the N6 group of A37. BUD32 has ATPase activity in the context of the EKC/KEOPS complex and likely plays a supporting role to the catalytic subunit KAE1. The EKC/KEOPS complex also promotes both telomere uncapping and telomere elongation. The complex is required for efficient recruitment of transcriptional coactivators. The chain is EKC/KEOPS complex subunit SPAP27G11.07c from Schizosaccharomyces pombe (strain 972 / ATCC 24843) (Fission yeast).